The sequence spans 192 residues: Actin, muscle (192 aa).

Belongs to the actin family.

It localises to the cytoplasm. Its subcellular location is the cytoskeleton. The enzyme catalyses ATP + H2O = ADP + phosphate + H(+). Actins are highly conserved proteins that are involved in various types of cell motility and are ubiquitously expressed in all eukaryotic cells. The sequence is that of Actin, muscle from Chionoecetes opilio (Atlantic snow crab).